The sequence spans 444 residues: C4-dicarboxylate transport protein 3 (444 aa).

9 consecutive transmembrane segments (helical) span residues 22–42 (VLYV…WLWP), 60–80 (LIKM…IAHI), 95–115 (VYFE…GNLV), 162–182 (GEIL…MSLG), 198–218 (AVFG…FGAM), 236–256 (LIAT…GIIA), 321–341 (IYMT…LSFG), 346–366 (ILVV…AGFI), and 399–419 (LTNL…EGEL).

Belongs to the dicarboxylate/amino acid:cation symporter (DAACS) (TC 2.A.23) family.

The protein resides in the cell inner membrane. In terms of biological role, responsible for the transport of dicarboxylates such as succinate, fumarate, and malate from the periplasm across the membrane. The chain is C4-dicarboxylate transport protein 3 from Bradyrhizobium diazoefficiens (strain JCM 10833 / BCRC 13528 / IAM 13628 / NBRC 14792 / USDA 110).